The sequence spans 1834 residues: Non-reducing polyketide synthase spyA (1834 aa).

The Starter acyltransferase (SAT) domain occupies 91–255; the sequence is LAPLTVIIHL…TRIPIYGRYH (165 aa). The Ketosynthase family 3 (KS3) domain occupies 385–801; sequence EHSIAVIGAA…GNNTAVIVCE (417 aa). Active-site for beta-ketoacyl synthase activity residues include C551, H687, and H724. A Malonyl-CoA:ACP transacylase (MAT) domain is found at 919–1164; that stretch reads YEGSSLLRSH…KELGPCTWVE (246 aa). The N-terminal hotdog fold stretch occupies residues 1269-1398; the sequence is PLVYLLRDEG…GVISLRQERH (130 aa). The region spanning 1269–1577 is the PKS/mFAS DH domain; the sequence is PLVYLLRDEG…FVRITASSLN (309 aa). Residues 1269–1577 are product template (PT) domain; it reads PLVYLLRDEG…FVRITASSLN (309 aa). Positions 1428–1577 are C-terminal hotdog fold; it reads AISLKEGIIY…FVRITASSLN (150 aa). The Carrier 1 domain maps to 1616–1690; sequence SDILSILSHL…TLCQEIQTQR (75 aa). S1650 carries the post-translational modification O-(pantetheine 4'-phosphoryl)serine. Positions 1693–1720 are disordered; that stretch reads RLARASRTTTATRNTSFSLGRRTSSTES. Over residues 1697 to 1710 the composition is skewed to low complexity; the sequence is ASRTTTATRNTSFS. Residues 1731–1807 enclose the Carrier 2 domain; the sequence is SKSAAVLAQL…GLARLILASE (77 aa). S1767 is modified (O-(pantetheine 4'-phosphoryl)serine).

The cofactor is pantetheine 4'-phosphate.

The enzyme catalyses 2 malonyl-CoA + acetyl-CoA + 2 H(+) = triacetate lactone + 2 CO2 + 3 CoA. The protein operates within secondary metabolite biosynthesis; terpenoid biosynthesis. Non-reducing polyketide synthase; part of the gene cluster that mediates the biosynthesis of meroterpenoids called sartorypyrones. The biosynthesis of sartorypyrones begins with the production of triacetic acid lactone (TAL) by the NR-PKS spyA using one molecule of acetyl-CoA and two molecules of malonyl-CoA. As spyA lacks a thioesterase (TE) domain, TAL is likely generated through self-release from spyA by spontaneous lactonization. After production of TAL, the prenyltransferase spyF then conjugates geranylgeranyl pyrophosphate (GGPP) to TAL to form geranylgeranyl-triacetate lactone, for which the pathway-specific geranylgeranyl pyrophosphate synthase (GGPS) spyE is required to provide GGPP. Subsequently, geranylgeranyl-triacetate lactone is epoxidized at the terminal olein by the FAD-dependent monooxygenase spyC, followed by cyclization of the terpenoid component catalyzed by the terpene cyclase spyD to produce both the bicyclic sartorypyrone F and the monocyclic sartorypyrone D. Finally, the last step of the biosynthesis involves the acetylation of the meroterpenoids sartorypyrones D and F by the acetyltransferase SpyB to produce sartorypyrones A and G, respectively. This chain is Non-reducing polyketide synthase spyA, found in Aspergillus fumigatus (strain ATCC MYA-4609 / CBS 101355 / FGSC A1100 / Af293) (Neosartorya fumigata).